Reading from the N-terminus, the 311-residue chain is Ribosomal protein L11 methyltransferase (311 aa).

S-adenosyl-L-methionine is bound by residues threonine 162, glycine 183, aspartate 205, and asparagine 248.

The protein belongs to the methyltransferase superfamily. PrmA family.

It is found in the cytoplasm. The enzyme catalyses L-lysyl-[protein] + 3 S-adenosyl-L-methionine = N(6),N(6),N(6)-trimethyl-L-lysyl-[protein] + 3 S-adenosyl-L-homocysteine + 3 H(+). Its function is as follows. Methylates ribosomal protein L11. This is Ribosomal protein L11 methyltransferase from Bacillus pumilus (strain SAFR-032).